The sequence spans 214 residues: Respiratory supercomplex factor 1, mitochondrial (214 aa).

Residues 1 to 36 (MSGMPNAELVREQQQPGDPMGSSAHPNAYVPEVGGL) form a disordered region. In terms of domain architecture, HIG1 spans 29–120 (YVPEVGGLGS…QQAAATIPAP (92 aa)). Transmembrane regions (helical) follow at residues 57-73 (LVPIGSLLTCGALIAAS) and 88-109 (LRWRVGFQGLTVLAALVGSFYY). Positions 177–197 (KRLEEALLGKEEEINLEQLKK) form a coiled coil. The disordered stretch occupies residues 195-214 (LKKTATKPRPVIGQDARRQV).

This sequence belongs to the RCF1 family. In terms of assembly, associates with the respiratory chain complex III/complex IV supercomplex.

Its subcellular location is the mitochondrion membrane. Functionally, cytochrome c oxidase subunit which plays a role in assembly of respiratory supercomplexes. The sequence is that of Respiratory supercomplex factor 1, mitochondrial (RCF1) from Mycosarcoma maydis (Corn smut fungus).